The following is a 151-amino-acid chain: Globin CTT-IIIA (151 aa).

The Globin domain maps to 8 to 147 (SMTDAQVAAV…MFHVIFNALD (140 aa)). Residue histidine 98 coordinates heme b.

The protein belongs to the globin family. In terms of assembly, monomer.

The polypeptide is Globin CTT-IIIA (Chironomus thummi thummi (Midge)).